An 85-amino-acid polypeptide reads, in one-letter code: Small ribosomal subunit protein bS16 (85 aa).

This sequence belongs to the bacterial ribosomal protein bS16 family.

This Xanthomonas oryzae pv. oryzae (strain PXO99A) protein is Small ribosomal subunit protein bS16.